The sequence spans 627 residues: UvrABC system protein C (627 aa).

In terms of domain architecture, GIY-YIG spans 26-105 (PEPGVYFMRD…IKQHQPYFNV (80 aa)). The 36-residue stretch at 215–250 (QELIDILSEQMEKAAEALNFEVAARIRDQIAGLKSL) folds into the UVR domain.

Belongs to the UvrC family. Interacts with UvrB in an incision complex.

The protein resides in the cytoplasm. Functionally, the UvrABC repair system catalyzes the recognition and processing of DNA lesions. UvrC both incises the 5' and 3' sides of the lesion. The N-terminal half is responsible for the 3' incision and the C-terminal half is responsible for the 5' incision. The polypeptide is UvrABC system protein C (Trichormus variabilis (strain ATCC 29413 / PCC 7937) (Anabaena variabilis)).